A 129-amino-acid chain; its full sequence is MLHMHIASWVLLIILFFAAYFNFSEKQGASPYFKPIHMLLRLFMLLVLISGFWVWIQSFSSGAAGGHMLLTLKMICGVAVVALMEVTITKRKKGQPSHGLMWTTIVVIILTMIIGIILPMGPITQMFGL.

A run of 4 helical transmembrane segments spans residues 1-21, 36-56, 68-88, and 100-120; these read MLHMHIASWVLLIILFFAAYF, IHMLLRLFMLLVLISGFWVWI, MLLTLKMICGVAVVALMEVTI, and LMWTTIVVIILTMIIGIILPM.

This sequence belongs to the UPF0344 family.

It localises to the cell membrane. The sequence is that of UPF0344 protein SSP1805 from Staphylococcus saprophyticus subsp. saprophyticus (strain ATCC 15305 / DSM 20229 / NCIMB 8711 / NCTC 7292 / S-41).